The sequence spans 649 residues: 1-deoxy-D-xylulose-5-phosphate synthase (649 aa).

Thiamine diphosphate-binding positions include histidine 74 and 115 to 117 (GHA). Aspartate 146 is a Mg(2+) binding site. Thiamine diphosphate-binding positions include 147–148 (GA), asparagine 176, tyrosine 292, and glutamate 375. Residue asparagine 176 coordinates Mg(2+).

This sequence belongs to the transketolase family. DXPS subfamily. Homodimer. The cofactor is Mg(2+). Requires thiamine diphosphate as cofactor.

It carries out the reaction D-glyceraldehyde 3-phosphate + pyruvate + H(+) = 1-deoxy-D-xylulose 5-phosphate + CO2. It functions in the pathway metabolic intermediate biosynthesis; 1-deoxy-D-xylulose 5-phosphate biosynthesis; 1-deoxy-D-xylulose 5-phosphate from D-glyceraldehyde 3-phosphate and pyruvate: step 1/1. In terms of biological role, catalyzes the acyloin condensation reaction between C atoms 2 and 3 of pyruvate and glyceraldehyde 3-phosphate to yield 1-deoxy-D-xylulose-5-phosphate (DXP). This chain is 1-deoxy-D-xylulose-5-phosphate synthase, found in Synechococcus sp. (strain JA-3-3Ab) (Cyanobacteria bacterium Yellowstone A-Prime).